The primary structure comprises 418 residues: Nucleoside permease NupG (418 aa).

Over 1 to 4 (MNLK) the chain is Cytoplasmic. Residues 5-29 (LQLKILSFLQFCLWGSWLTTLGSYM) form a helical membrane-spanning segment. Residues 30–36 (FVTLKFD) are Periplasmic-facing. Residues 37-58 (GASIGAVYSSLGIAAVFMPALL) form a helical membrane-spanning segment. Over 59-67 (GIVADKWLS) the chain is Cytoplasmic. Residues 68 to 88 (AKWVYAICHTIGAITLFMAAQ) form a helical membrane-spanning segment. Residues 89-91 (VTT) lie on the Periplasmic side of the membrane. The helical transmembrane segment at 92–113 (PEAMFLVILINSFAYMPTLGLI) threads the bilayer. Over 114–135 (NTISYYRLQNAGMDIVTDFPPI) the chain is Cytoplasmic. The helical transmembrane segment at 136-156 (RIWGTIGFIMAMWVVSLSGFE) threads the bilayer. The Periplasmic segment spans residues 157–158 (LS). A helical membrane pass occupies residues 159 to 178 (HMQLYIGAALSAILVLFTLT). The Cytoplasmic segment spans residues 179–209 (LPHIPVAKQQANQSWTTLLGLDAFALFKNKR). Residues 210–236 (MAIFFIFSMLLGAELQITNMFGNTFLH) traverse the membrane as a helical segment. Residues 237–247 (SFDKDPMFASS) lie on the Periplasmic side of the membrane. A helical membrane pass occupies residues 248–268 (FIVQHASIIMSISQISETLFI). Residues 269 to 280 (LTIPFFLSRYGI) are Cytoplasmic-facing. The helical transmembrane segment at 281-300 (KNVMMISIVAWILRFALFAY) threads the bilayer. Residues 301–305 (GDPTP) are Periplasmic-facing. The chain crosses the membrane as a helical span at residues 306–326 (FGTVLLVLSMIVYGCAFDFFN). Residues 327 to 346 (ISGSVFVEKEVSPAIRASAQ) lie on the Cytoplasmic side of the membrane. Residues 347-369 (GMFLMMTNGFGCILGGIVSGKVV) form a helical membrane-spanning segment. At 370-379 (EMYTQNGITD) the chain is on the periplasmic side. A helical transmembrane segment spans residues 380–403 (WQTVWLIFAGYSVVLAFAFMAMFK). The Cytoplasmic portion of the chain corresponds to 404-418 (YKHVRVPTGTQTVSH).

This sequence belongs to the major facilitator superfamily. Nucleoside:H(+) symporter (NHS) (TC 2.A.1.10) family.

The protein localises to the cell inner membrane. It carries out the reaction adenosine(in) + H(+)(in) = adenosine(out) + H(+)(out). The enzyme catalyses uridine(in) + H(+)(in) = uridine(out) + H(+)(out). The catalysed reaction is thymidine(in) + H(+)(in) = thymidine(out) + H(+)(out). It catalyses the reaction cytidine(in) + H(+)(in) = cytidine(out) + H(+)(out). It carries out the reaction 2'-deoxycytidine(in) + H(+)(in) = 2'-deoxycytidine(out) + H(+)(out). The enzyme catalyses guanosine(in) + H(+)(in) = guanosine(out) + H(+)(out). The catalysed reaction is inosine(in) + H(+)(in) = inosine(out) + H(+)(out). With respect to regulation, inhibited by the protonophore uncouplers 2,4-dinitrophenol and carbonyl cyanide m-chlorophenylhydrazone (CCCP), and by valinomycin. Inhibited by the nucleoside antibiotic showdomycin. Functionally, broad-specificity transporter of purine and pyrimidine nucleosides. Can transport adenosine, uridine, thymidine, cytidine, deoxycytidine, guanosine and inosine. Can also transport xanthosine, but with a very low affinity. Transport is driven by a proton motive force. This is Nucleoside permease NupG from Escherichia coli (strain K12).